The following is a 511-amino-acid chain: Histidine ammonia-lyase (511 aa).

Positions 142–144 (ASG) form a cross-link, 5-imidazolinone (Ala-Gly). Position 143 is a 2,3-didehydroalanine (Ser) (serine 143).

It belongs to the PAL/histidase family. In terms of processing, contains an active site 4-methylidene-imidazol-5-one (MIO), which is formed autocatalytically by cyclization and dehydration of residues Ala-Ser-Gly.

Its subcellular location is the cytoplasm. It catalyses the reaction L-histidine = trans-urocanate + NH4(+). It functions in the pathway amino-acid degradation; L-histidine degradation into L-glutamate; N-formimidoyl-L-glutamate from L-histidine: step 1/3. The protein is Histidine ammonia-lyase of Phenylobacterium zucineum (strain HLK1).